A 363-amino-acid polypeptide reads, in one-letter code: 3-dehydroquinate synthase (363 aa).

NAD(+) is bound by residues 107 to 111 (GVIGD), 131 to 132 (TT), lysine 144, and lysine 153. Zn(2+) is bound by residues glutamate 186, histidine 251, and histidine 268.

It belongs to the sugar phosphate cyclases superfamily. Dehydroquinate synthase family. The cofactor is NAD(+). Co(2+) serves as cofactor. Zn(2+) is required as a cofactor.

It is found in the cytoplasm. It catalyses the reaction 7-phospho-2-dehydro-3-deoxy-D-arabino-heptonate = 3-dehydroquinate + phosphate. The protein operates within metabolic intermediate biosynthesis; chorismate biosynthesis; chorismate from D-erythrose 4-phosphate and phosphoenolpyruvate: step 2/7. Catalyzes the conversion of 3-deoxy-D-arabino-heptulosonate 7-phosphate (DAHP) to dehydroquinate (DHQ). The protein is 3-dehydroquinate synthase of Nostoc sp. (strain PCC 7120 / SAG 25.82 / UTEX 2576).